A 191-amino-acid polypeptide reads, in one-letter code: Calcium-activated potassium channel subunit beta-1 (191 aa).

The Cytoplasmic segment spans residues 2–18; that stretch reads GKKLVMAQRRGETRALC. Residues 19-39 traverse the membrane as a helical segment; that stretch reads LGVAMVVGAVITYYILGTTVL. The Extracellular segment spans residues 40-157; that stretch reads PLYQKSVWTQ…YRRLYGPQSL (118 aa). N-linked (GlcNAc...) asparagine glycans are attached at residues N80 and N142. A helical transmembrane segment spans residues 158-178; it reads LFSLFWPTFLLTGGLLIIVMV. Residues 179–191 are Cytoplasmic-facing; sequence KINQSLSILAAQR.

Belongs to the KCNMB (TC 8.A.14.1) family. KCNMB1 subfamily. As to quaternary structure, interacts with KCNMA1 tetramer. There are probably 4 molecules of KCMNB1 per KCNMA1 tetramer. N-glycosylated.

The protein resides in the membrane. Its function is as follows. Regulatory subunit of the calcium activated potassium KCNMA1 (maxiK) channel. Modulates the calcium sensitivity and gating kinetics of KCNMA1, thereby contributing to KCNMA1 channel diversity. Increases the apparent Ca(2+)/voltage sensitivity of the KCNMA1 channel. It also modifies KCNMA1 channel kinetics and alters its pharmacological properties. It slows down the activation and the deactivation kinetics of the channel. Acts as a negative regulator of smooth muscle contraction by enhancing the calcium sensitivity to KCNMA1. Its presence is also a requirement for internal binding of the KCNMA1 channel opener dehydrosoyasaponin I (DHS-1) triterpene glycoside and for external binding of the agonist hormone 17-beta-estradiol (E2). Increases the binding activity of charybdotoxin (CTX) toxin to KCNMA1 peptide blocker by increasing the CTX association rate and decreasing the dissociation rate. The polypeptide is Calcium-activated potassium channel subunit beta-1 (KCNMB1) (Bos taurus (Bovine)).